We begin with the raw amino-acid sequence, 251 residues long: Ubiquinone/menaquinone biosynthesis C-methyltransferase UbiE (251 aa).

S-adenosyl-L-methionine-binding positions include Thr74, Asp95, 123–124, and Ser140; that span reads NA.

Belongs to the class I-like SAM-binding methyltransferase superfamily. MenG/UbiE family.

The catalysed reaction is a 2-demethylmenaquinol + S-adenosyl-L-methionine = a menaquinol + S-adenosyl-L-homocysteine + H(+). It catalyses the reaction a 2-methoxy-6-(all-trans-polyprenyl)benzene-1,4-diol + S-adenosyl-L-methionine = a 5-methoxy-2-methyl-3-(all-trans-polyprenyl)benzene-1,4-diol + S-adenosyl-L-homocysteine + H(+). It participates in quinol/quinone metabolism; menaquinone biosynthesis; menaquinol from 1,4-dihydroxy-2-naphthoate: step 2/2. Its pathway is cofactor biosynthesis; ubiquinone biosynthesis. In terms of biological role, methyltransferase required for the conversion of demethylmenaquinol (DMKH2) to menaquinol (MKH2) and the conversion of 2-polyprenyl-6-methoxy-1,4-benzoquinol (DDMQH2) to 2-polyprenyl-3-methyl-6-methoxy-1,4-benzoquinol (DMQH2). This Enterobacter sp. (strain 638) protein is Ubiquinone/menaquinone biosynthesis C-methyltransferase UbiE.